We begin with the raw amino-acid sequence, 156 residues long: D-aminoacyl-tRNA deacylase (156 aa).

The Gly-cisPro motif, important for rejection of L-amino acids motif lies at 142–143 (GP).

The protein belongs to the DTD family. In terms of assembly, homodimer.

Its subcellular location is the cytoplasm. It carries out the reaction glycyl-tRNA(Ala) + H2O = tRNA(Ala) + glycine + H(+). The enzyme catalyses a D-aminoacyl-tRNA + H2O = a tRNA + a D-alpha-amino acid + H(+). An aminoacyl-tRNA editing enzyme that deacylates mischarged D-aminoacyl-tRNAs. Also deacylates mischarged glycyl-tRNA(Ala), protecting cells against glycine mischarging by AlaRS. Acts via tRNA-based rather than protein-based catalysis; rejects L-amino acids rather than detecting D-amino acids in the active site. By recycling D-aminoacyl-tRNA to D-amino acids and free tRNA molecules, this enzyme counteracts the toxicity associated with the formation of D-aminoacyl-tRNA entities in vivo and helps enforce protein L-homochirality. The protein is D-aminoacyl-tRNA deacylase of Cupriavidus pinatubonensis (strain JMP 134 / LMG 1197) (Cupriavidus necator (strain JMP 134)).